The primary structure comprises 444 residues: Nuclear envelope integral membrane protein 1 (444 aa).

The first 43 residues, 1 to 43, serve as a signal peptide directing secretion; sequence MAGGMKVAVSPAVGPGPWGSGVGGGGTVRLLLILSGCLVYGTA. Asn125 is a glycosylation site (N-linked (GlcNAc...) asparagine). Helical transmembrane passes span 161-181, 186-206, 216-236, 245-265, and 289-309; these read PKLF…DLLS, FYYS…IIFI, PIYV…QLVF, CYWQ…FAVC, and LCFM…IIIA. Residues 186–297 are a; required for its colocalization with lamins at the nuclear envelope; the sequence is FYYSTGMTVG…GLCFMYSGIQ (112 aa). The b; required for interaction with RAN-GTP stretch occupies residues 336 to 405; it reads PVPPRLLTEE…LTPNEVSVHE (70 aa). Residues 336–444 are required for nuclear localization; sequence PVPPRLLTEE…PAITQNNFLT (109 aa). Residues Ser368, Ser424, and Ser425 each carry the phosphoserine modification.

Belongs to the NEMP family. In terms of assembly, homooligomer. Interacts with RAN-GTP. Interacts with EMD. Phosphorylation may regulate its interaction with RAN-GTP.

Its subcellular location is the nucleus inner membrane. The protein resides in the nucleus envelope. Together with EMD, contributes to nuclear envelope stiffness in germ cells. Required for female fertility. Essential for normal erythropoiesis. Required for efficient nuclear envelope opening and enucleation during the late stages of erythroblast maturation. The polypeptide is Nuclear envelope integral membrane protein 1 (NEMP1) (Homo sapiens (Human)).